We begin with the raw amino-acid sequence, 285 residues long: Golgi phosphoprotein 3-like (285 aa).

A disordered region spans residues 1–43 (MTTLTHRTRRTEVSKSSEKKIESEEDTNQERSPDNEDPGDSKD). Over residues 10 to 43 (RTEVSKSSEKKIESEEDTNQERSPDNEDPGDSKD) the composition is skewed to basic and acidic residues. A 1,2-diacyl-sn-glycero-3-phospho-(1D-myo-inositol 4-phosphate) is bound by residues Trp-67 and Arg-76. Phosphoserine is present on Ser-112. The a 1,2-diacyl-sn-glycero-3-phospho-(1D-myo-inositol 4-phosphate) site is built by Arg-157 and Arg-160. Positions 176–187 (EKQNFLLFDMTT) are beta-hairpin required for oligomerization.

The protein belongs to the GOLPH3/VPS74 family. Homooligomer. Does not interact MYO18; differs from GOLPH3 by its inability to interact with MYO18. May interact with ARF1. In terms of tissue distribution, expressed in a subset of tissues tested with higher expression in salivary gland, small intestine and skin (at protein level).

The protein localises to the golgi apparatus. Its subcellular location is the golgi stack membrane. The protein resides in the trans-Golgi network membrane. Functionally, phosphatidylinositol-4-phosphate-binding protein that may antagonize the action of GOLPH3 which is required for the process of vesicle budding at the Golgi and anterograde transport to the plasma membrane. The sequence is that of Golgi phosphoprotein 3-like (Golph3l) from Mus musculus (Mouse).